Reading from the N-terminus, the 131-residue chain is Large ribosomal subunit protein mL60 (131 aa).

The N-terminal 12 residues, 1-12 (MFGPFKLTSPVA), are a transit peptide targeting the mitochondrion.

Belongs to the mitochondrion-specific ribosomal protein mL60 family. Component of the mitochondrial large ribosomal subunit (mt-LSU). Mature yeast 74S mitochondrial ribosomes consist of a small (37S) and a large (54S) subunit. The 37S small subunit contains a 15S ribosomal RNA (15S mt-rRNA) and 34 different proteins. The 54S large subunit contains a 21S rRNA (21S mt-rRNA) and 46 different proteins.

It localises to the mitochondrion. Functionally, component of the mitochondrial ribosome (mitoribosome), a dedicated translation machinery responsible for the synthesis of mitochondrial genome-encoded proteins, including at least some of the essential transmembrane subunits of the mitochondrial respiratory chain. The mitoribosomes are attached to the mitochondrial inner membrane and translation products are cotranslationally integrated into the membrane. The sequence is that of Large ribosomal subunit protein mL60 (MRPL31) from Saccharomyces cerevisiae (strain ATCC 204508 / S288c) (Baker's yeast).